We begin with the raw amino-acid sequence, 120 residues long: Large ribosomal subunit protein uL18 (120 aa).

This sequence belongs to the universal ribosomal protein uL18 family. As to quaternary structure, part of the 50S ribosomal subunit; part of the 5S rRNA/L5/L18/L25 subcomplex. Contacts the 5S and 23S rRNAs.

In terms of biological role, this is one of the proteins that bind and probably mediate the attachment of the 5S RNA into the large ribosomal subunit, where it forms part of the central protuberance. This chain is Large ribosomal subunit protein uL18, found in Chloroherpeton thalassium (strain ATCC 35110 / GB-78).